A 1560-amino-acid chain; its full sequence is Tenascin-N (1560 aa).

The N-terminal stretch at 1-26 (MGLWGMLAFPLGFLLASVLLVASAPA) is a signal peptide. 3 consecutive EGF-like domains span residues 167-198 (DQPT…VDCA), 199-229 (YAAC…EDCS), and 230-260 (EQRC…PDCS). 9 disulfide bridges follow: Cys-171–Cys-181, Cys-175–Cys-186, Cys-188–Cys-197, Cys-202–Cys-212, Cys-206–Cys-217, Cys-219–Cys-228, Cys-233–Cys-243, Cys-237–Cys-248, and Cys-250–Cys-259. Fibronectin type-III domains follow at residues 264–353 (APQG…DLAV), 354–444 (VGTA…TEID), 445–532 (GPTN…TEID), 533–622 (SPEN…IDSP), 623–706 (KNLV…APTD), 709–798 (GPKN…IDSP), 799–882 (KNLV…APTD), 885–970 (GPKN…APTD), 973–1062 (SPKN…IDSP), 1063–1144 (KNLV…TKAP), 1149–1238 (SPKN…IDPP), and 1239–1325 (RNLR…VDAR). 2 disordered regions span residues 868 to 888 (GTQE…GPKN) and 1044 to 1063 (GARE…DSPK). Over residues 1044–1061 (GARESKKANTEGHTDIDS) the composition is skewed to basic and acidic residues. Residues 1323 to 1540 (DARFPHPSDC…YVELKIRPFG (218 aa)) form the Fibrinogen C-terminal domain. N-linked (GlcNAc...) asparagine glycosylation is present at Asn-1411.

This sequence belongs to the tenascin family. As to quaternary structure, homohexamer. In terms of tissue distribution, highest expression in kidney followed by spleen and brain. In brain, highest expression is found in hippocampus, cerebellum and olfactory bulb. Expressed in aortic valve, corneal limbus. Expressed in ribs periosteum. During a fracture repair process, expression increases in cells of newly formed perichondrium/peristeum surrounding the cartalaginous callus.

The protein resides in the secreted. Its subcellular location is the extracellular space. It is found in the extracellular matrix. In terms of biological role, extracellular matrix protein that seems to be a ligand for ITGA8:ITGB1, ITGAV:ITGB1 and ITGA4:ITGB1. Involved in neurite outgrowth and cell migration in hippocampal explants. During endochondral bone formation, inhibits proliferation and differentiation of proteoblasts mediated by canonical WNT signaling. In tumors, stimulates angiogenesis by elongation, migration and sprouting of endothelial cells. Expressed in most mammary tumors, may facilitate tumorigenesis by supporting the migratory behavior of breast cancer cells. This Mus musculus (Mouse) protein is Tenascin-N.